Consider the following 108-residue polypeptide: NADH dehydrogenase [ubiquinone] 1 alpha subcomplex subunit 8-A (108 aa).

CHCH domains lie at 28 to 69 (GIRC…LKDL) and 70 to 108 (HQRCPKEMDAYVGCMYYYTNEFELCRKEQEAFEKVCPLK). Short sequence motifs (cx9C motif) lie at residues 31–41 (CMPENMAFLKC), 51–61 (CLEKGRDVTRC), and 73–83 (CPKEMDAYVGC). 4 cysteine pairs are disulfide-bonded: Cys-31-Cys-61, Cys-41-Cys-51, Cys-73-Cys-105, and Cys-83-Cys-94. Residues 94 to 105 (CRKEQEAFEKVC) carry the Cx10C motif motif.

It belongs to the complex I NDUFA8 subunit family. Complex I is composed of at least 49 different subunits.

It is found in the mitochondrion. The protein resides in the mitochondrion intermembrane space. Accessory subunit of the mitochondrial membrane respiratory chain NADH dehydrogenase (Complex I), that is believed not to be involved in catalysis. Complex I functions in the transfer of electrons from NADH to the respiratory chain. The immediate electron acceptor for the enzyme is believed to be ubiquinone. The protein is NADH dehydrogenase [ubiquinone] 1 alpha subcomplex subunit 8-A of Arabidopsis thaliana (Mouse-ear cress).